A 271-amino-acid polypeptide reads, in one-letter code: Aquaporin-1 (271 aa).

Over 1-11 (MASEFKKKLFW) the chain is Cytoplasmic. The chain crosses the membrane as a helical span at residues 12 to 29 (RAVVAEFLAMILFVFISI). Residues 30-48 (GSALGFNYPVRNNQTAGAA) lie on the Extracellular side of the membrane. N-linked (GlcNAc...) asparagine glycosylation occurs at Asn42. The chain crosses the membrane as a helical span at residues 49–67 (QDNVKVSLAFGLSIATLAQ). Over 68 to 70 (SVG) the chain is Cytoplasmic. Residues 71–84 (HISGAHLNPAVTLG) lie within the membrane without spanning it. The NPA 1 signature appears at 78–80 (NPA). The Cytoplasmic portion of the chain corresponds to 85-92 (LLLSCQIS). The chain crosses the membrane as a helical span at residues 93–111 (ILRAVMYIIAQCVGAIVAT). At 112–135 (AILSGITSSLPDNSLGRNELAPGV) the chain is on the extracellular side. Residues 136-155 (NSGQGLGIEIIGTLQLVLCV) form a helical membrane-spanning segment. Over 156 to 165 (LATTDRRRRD) the chain is Cytoplasmic. The chain crosses the membrane as a helical span at residues 166–183 (LGGSGPLAIGLSVALGHL). Over 184-188 (LAIDY) the chain is Extracellular. The stretch at 189–201 (TGCGINPARSFGS) is an intramembrane region. The NPA 2 motif lies at 194–196 (NPA). Topologically, residues 202–208 (SVITHNF) are extracellular. A helical transmembrane segment spans residues 209-226 (KDHWIFWVGPFIGGALAV). The Cytoplasmic segment spans residues 227–271 (LIYDFILAPRSSDLTDRVKVWTSGQVEEYELDGDDINSRVEMKPK). Ser249 is subject to Phosphoserine. Tyr255 bears the Phosphotyrosine mark. Position 264 is a phosphoserine (Ser264).

The protein belongs to the MIP/aquaporin (TC 1.A.8) family. Homotetramer; each monomer provides an independent water pore. Component of the ankyrin-1 complex in the erythrocyte, composed of ANK1, RHCE, RHAG, SLC4A1, EPB42, GYPA, GYPB and AQP1. Interacts with EPHB2; involved in endolymph production in the inner ear. Identified in a complex with STOM. Interacts (via the N-terminal) with ANK1 (via ANK 1-5 repeats). Interacts (via the C-terminal) with EPB42.

Its subcellular location is the cell membrane. The catalysed reaction is H2O(in) = H2O(out). It carries out the reaction nitric oxide(out) = nitric oxide(in). It catalyses the reaction CO2(out) = CO2(in). The enzyme catalyses glycerol(in) = glycerol(out). The catalysed reaction is H2O2(out) = H2O2(in). It carries out the reaction K(+)(in) = K(+)(out). It catalyses the reaction Na(+)(in) = Na(+)(out). Its function is as follows. Forms a water channel that facilitates the transport of water across cell membranes, playing a crucial role in water homeostasis in various tissues. Could also be permeable to small solutes including hydrogen peroxide, glycerol and gases such as amonnia (NH3), nitric oxide (NO) and carbon dioxide (CO2). Recruited to the ankyrin-1 complex, a multiprotein complex of the erythrocyte membrane, it could be part of a CO2 metabolon, linking facilitated diffusion of CO2 across the membrane, anion exchange of Cl(-)/HCO3(-) and interconversion of dissolved CO2 and carbonic acid in the cytosol. In vitro, it shows non-selective gated cation channel activity and may be permeable to cations like K(+) and Na(+) in vivo. In Canis lupus familiaris (Dog), this protein is Aquaporin-1.